The following is a 334-amino-acid chain: Trans-3-hydroxy-L-proline dehydratase (334 aa).

The active-site Proton acceptor is Cys91. Residues 92–93 (GH), Asp250, and 255–256 (GT) each bind substrate.

Belongs to the proline racemase family.

It catalyses the reaction trans-3-hydroxy-L-proline = 1-pyrroline-2-carboxylate + H2O. In terms of biological role, catalyzes the dehydration of trans-3-hydroxy-L-proline (t3LHyp) to Delta(1)-pyrroline-2-carboxylate (Pyr2C). Is likely involved in a degradation pathway that converts t3LHyp to L-proline. Can also catalyze the epimerization of trans-4-hydroxy-L-proline (t4LHyp) to cis-4-hydroxy-D-proline (c4DHyp) in vitro. Displays no proline racemase activity. In Bacillus thuringiensis subsp. konkukian (strain 97-27), this protein is Trans-3-hydroxy-L-proline dehydratase.